The chain runs to 196 residues: Blue copper protein (196 aa).

Residues 1–22 form the signal peptide; that stretch reads MAGVFKTVTFLVLVFAAVVVFA. The region spanning 23–125 is the Phytocyanin domain; the sequence is EDYDVGDDTE…GQKLSITVVA (103 aa). H66 lines the Cu cation pocket. C79 and C113 are oxidised to a cystine. N98 carries N-linked (GlcNAc...) asparagine glycosylation. Positions 107, 112, and 117 each coordinate Cu cation. The interval 133–173 is disordered; sequence TPGAGATPAPGSTPSTGGTTPPTAGGTTTPSGSSGTTTPAG. Low complexity predominate over residues 135 to 173; sequence GAGATPAPGSTPSTGGTTPPTAGGTTTPSGSSGTTTPAG. The GPI-anchor amidated asparagine moiety is linked to residue N174. Residues 175–196 constitute a propeptide, removed in mature form; the sequence is AASSLGGATFLVAFVSAVVALF.

It localises to the cell membrane. Its function is as follows. Probably acts as an electron carrier. The chain is Blue copper protein (BCB) from Arabidopsis thaliana (Mouse-ear cress).